Consider the following 502-residue polypeptide: Glycerate kinase (502 aa).

This sequence belongs to the glycerate kinase type-2 family.

It localises to the cytoplasm. The catalysed reaction is (R)-glycerate + ATP = (2R)-3-phosphoglycerate + ADP + H(+). This chain is Glycerate kinase (glyctk), found in Danio rerio (Zebrafish).